The sequence spans 497 residues: Aldehyde dehydrogenase (497 aa).

Residue 241–246 (GSTLVG) coordinates NAD(+). Glu-264 functions as the Proton acceptor in the catalytic mechanism. Catalysis depends on Cys-298, which acts as the Nucleophile.

This sequence belongs to the aldehyde dehydrogenase family.

The catalysed reaction is an aldehyde + NAD(+) + H2O = a carboxylate + NADH + 2 H(+). It participates in alcohol metabolism; ethanol degradation; acetate from ethanol: step 2/2. The polypeptide is Aldehyde dehydrogenase (aldA) (Emericella nidulans (strain FGSC A4 / ATCC 38163 / CBS 112.46 / NRRL 194 / M139) (Aspergillus nidulans)).